A 198-amino-acid polypeptide reads, in one-letter code: Nucleoside triphosphate pyrophosphatase 1 (198 aa).

Catalysis depends on D75, which acts as the Proton acceptor.

This sequence belongs to the Maf family. A divalent metal cation serves as cofactor.

The protein localises to the cytoplasm. The catalysed reaction is a ribonucleoside 5'-triphosphate + H2O = a ribonucleoside 5'-phosphate + diphosphate + H(+). The enzyme catalyses a 2'-deoxyribonucleoside 5'-triphosphate + H2O = a 2'-deoxyribonucleoside 5'-phosphate + diphosphate + H(+). Its function is as follows. Nucleoside triphosphate pyrophosphatase. May have a dual role in cell division arrest and in preventing the incorporation of modified nucleotides into cellular nucleic acids. The protein is Nucleoside triphosphate pyrophosphatase 1 of Jannaschia sp. (strain CCS1).